The sequence spans 418 residues: Serine/threonine-protein kinase PCRK1 (418 aa).

Residues 36–63 (GSEFNSRDVSGTSTESSMGRKNSYPPVS) form a disordered region. A Protein kinase domain is found at 84 to 369 (FSRSVMIGEG…EVLEMVNKIV (286 aa)). Residues 90–98 (IGEGGFGCV) and Lys118 each bind ATP. Asp218 serves as the catalytic Proton acceptor. A phosphoserine mark is found at Ser373, Ser377, and Ser385.

Belongs to the protein kinase superfamily. Ser/Thr protein kinase family. In terms of assembly, interacts with FLS2.

The protein localises to the cell membrane. The catalysed reaction is L-seryl-[protein] + ATP = O-phospho-L-seryl-[protein] + ADP + H(+). It carries out the reaction L-threonyl-[protein] + ATP = O-phospho-L-threonyl-[protein] + ADP + H(+). Its function is as follows. Involved in the activation of early immune responses. Plays a role in pattern-triggered immunity (PTI) induced by pathogen-associated molecular patterns (PAMPs) and damage-associated molecular patterns (DAMPs). Contributes to PTI in response to the bacterial pathogen Pseudomonas syringae pv maculicola strain ES4326. Contributes to PTI in response to the bacterial pathogen Pseudomonas syringae pv tomato strain DC3000. Functions redundantly with PCRK2 in basal resistance against bacterial pathogens and in regulation of plant immunity. Functions together with PCRK2 downstream of the PAMP receptor FLS2. Contributes to the induction of SARD1 and CBP60G, which are transcriptional activator of ICS1, an enzyme involved in salicylate (SA) biosynthesis upon pathogen attack. In Arabidopsis thaliana (Mouse-ear cress), this protein is Serine/threonine-protein kinase PCRK1.